Reading from the N-terminus, the 1287-residue chain is SCL-interrupting locus protein (1287 aa).

M1 carries the N-acetylmethionine modification. The interaction with RBM14 stretch occupies residues 1-1018; that stretch reads MEPIYPFARP…IDSPTKVKKN (1018 aa). The segment at 231–781 is interaction with CPAP; that stretch reads YKYGYLTMDE…VSVEAQSSPG (551 aa). Disordered stretches follow at residues 378-417 and 508-533; these read RSSQ…SQKI and PPAY…PSHD. S395 is modified (phosphoserine). Residues 517–529 are compositionally biased toward polar residues; it reads HTRNSIKPSSHNG. The segment at 584–779 is PIN1-binding; the sequence is PMELQIPTPP…ELVSVEAQSS (196 aa). Phosphoserine is present on residues S753, S779, and S1135.

Homodimer. Interacts with PIN1 via its WW domain. This interaction is dependent on STIL mitotic phosphorylation. Interacts with CPAP. Interacts with RBM14 and this interaction interferes with the interaction of STIL with CPAP. Forms a complex with CPAP and SASS6. Interacts (via N-terminus) with CEP85; this interaction is essential for efficient centriolar targeting of STIL and subsequent PLK4 activation. Ubiquitinated. Post-translationally, phosphorylated following the activation of the mitotic checkpoint. As to expression, expressed in all hematopoietic tissues and cell lines. Highly expressed in a variety of tumors characterized by increased mitotic activity with highest expression in lung cancer.

It localises to the cytoplasm. It is found in the cytosol. The protein resides in the cytoskeleton. The protein localises to the microtubule organizing center. Its subcellular location is the centrosome. It localises to the centriole. It is found in the cell cortex. Its function is as follows. Immediate-early gene. Plays an important role in embryonic development as well as in cellular growth and proliferation; its long-term silencing affects cell survival and cell cycle distribution as well as decreases CDK1 activity correlated with reduced phosphorylation of CDK1. Plays a role as a positive regulator of the sonic hedgehog pathway, acting downstream of PTCH1. Plays an important role in the regulation of centriole duplication. Required for the onset of procentriole formation and proper mitotic progression. During procentriole formation, is essential for the correct loading of SASS6 and CPAP to the base of the procentriole to initiate procentriole assembly. In complex with STIL acts as a modulator of PLK4-driven cytoskeletal rearrangements and directional cell motility. The chain is SCL-interrupting locus protein (STIL) from Homo sapiens (Human).